A 622-amino-acid chain; its full sequence is Wall-associated receptor kinase-like 21 (622 aa).

An N-terminal signal peptide occupies residues 1–21; the sequence is MAETPQPYLIFVFFVFTLTVA. The Extracellular segment spans residues 22–247; that stretch reads TQTTGSVKCK…LVYKRKGLHK (226 aa). 5 N-linked (GlcNAc...) asparagine glycosylation sites follow: Asn-50, Asn-114, Asn-131, Asn-160, and Asn-195. Residues 248-268 form a helical membrane-spanning segment; the sequence is LVVLGTAGILVGVLVIVVLIA. Over 269–622 the chain is Cytoplasmic; it reads TYFFRNKQSA…MKRQQSFPRE (354 aa). In terms of domain architecture, Protein kinase spans 314 to 594; it reads FSDKNMLGTG…EITEDLHRIK (281 aa). Residues 320–328 and Lys-342 each bind ATP; that span reads LGTGAYGTV. Asp-439 serves as the catalytic Proton acceptor.

It belongs to the protein kinase superfamily. Ser/Thr protein kinase family.

It localises to the membrane. It catalyses the reaction L-seryl-[protein] + ATP = O-phospho-L-seryl-[protein] + ADP + H(+). It carries out the reaction L-threonyl-[protein] + ATP = O-phospho-L-threonyl-[protein] + ADP + H(+). Serine/threonine-protein kinase that may function as a signaling receptor of extracellular matrix component. The chain is Wall-associated receptor kinase-like 21 (WAKL21) from Arabidopsis thaliana (Mouse-ear cress).